The following is a 478-amino-acid chain: Pentraxin-4 (478 aa).

The N-terminal stretch at 1 to 25 (MGCSWRKTLSFFLVFVPIYLHGASS) is a signal peptide. Residues N67 and N91 are each glycosylated (N-linked (GlcNAc...) asparagine). The span at 208–222 (RDRQELRAASEHRGP) shows a compositional bias: basic and acidic residues. The segment at 208-262 (RDRQELRAASEHRGPPQDSSAPLQGRREPPASGSHRVLSGTAPKDPRQQAWSPQV) is disordered. A Pentraxin (PTX) domain is found at 269-473 (VGPTLVFPNA…GFVQGANCTC (205 aa)). C300 and C364 are joined by a disulfide. Ca(2+) contacts are provided by D322, N323, E406, Q407, and D408.

Ca(2+) is required as a cofactor. In terms of tissue distribution, widely expressed at low levels with highest levels in small intestine, testis and brain. Very low expression in endothelial cells, monocytes, neutrophils and lymphocytes. Isoform 1 is not expressed in small intestine.

The protein resides in the secreted. In Homo sapiens (Human), this protein is Pentraxin-4 (PTX4).